The chain runs to 801 residues: Glycerol-3-phosphate acyltransferase 2, mitochondrial (801 aa).

The tract at residues 1 to 24 (MDTMLKSNPQTQQRSNHNGQETSL) is disordered. Over 1-305 (MDTMLKSNPQ…PGPRLSALGQ (305 aa)) the chain is Cytoplasmic. An acyltransferase region spans residues 180 to 290 (QLHKGQMKMV…SGQPLLIFLE (111 aa)). An HXXXXD motif motif is present at residues 205–210 (HKSLLD). Residues 306–332 (AWLGVVIQAVQAGIISDATLVPVAIAY) traverse the membrane as a helical segment. At 333-449 (DLVPDAPCNM…QLLVRRLSRH (117 aa)) the chain is on the mitochondrial intermembrane side. The chain crosses the membrane as a helical span at residues 450-472 (VLSASVASSAVMSTAIMATLLLL). Over 473 to 801 (KHQKGVVLSQ…EQFIRQFICS (329 aa)) the chain is Cytoplasmic. Position 662 is a phosphoserine (Ser-662). Thr-666 is subject to Phosphothreonine. Phosphoserine is present on residues Ser-668 and Ser-670.

It belongs to the GPAT/DAPAT family. As to quaternary structure, interacts with PIWIL2. As to expression, highly expressed in the testis. Expressed at lower levels in the heart, liver, kidney, spleen and adipose cells. Only detected in primary spermatocytes.

Its subcellular location is the mitochondrion outer membrane. The enzyme catalyses sn-glycerol 3-phosphate + an acyl-CoA = a 1-acyl-sn-glycero-3-phosphate + CoA. It catalyses the reaction a 1-acyl-sn-glycero-3-phosphate + an acyl-CoA = a 1,2-diacyl-sn-glycero-3-phosphate + CoA. The catalysed reaction is 1-(9Z-octadecenoyl)-sn-glycero-3-phosphate + (9Z)-octadecenoyl-CoA = 1,2-di-(9Z-octadecenoyl)-sn-glycero-3-phosphate + CoA. It carries out the reaction 1-(9Z-octadecenoyl)-sn-glycero-3-phosphate + (5Z,8Z,11Z,14Z)-eicosatetraenoyl-CoA = 1-(9Z)-octadecenoyl-2-(5Z,8Z,11Z,14Z)-eicosatetraenoyl-sn-glycero-3-phosphate + CoA. The enzyme catalyses (5Z,8Z,11Z,14Z)-eicosatetraenoyl-CoA + sn-glycerol 3-phosphate = 1-(5Z,8Z,11Z,14Z-eicosatetraenoyl)-sn-glycero-3-phosphate + CoA. It functions in the pathway phospholipid metabolism; CDP-diacylglycerol biosynthesis; CDP-diacylglycerol from sn-glycerol 3-phosphate: step 1/3. Inhibited by N-ethylmaleimide (NEM). In terms of biological role, transfers an acyl-group from acyl-ACP to the sn-1 position of glycerol-3-phosphate producing a lysophosphatidic acid (LPA), an essential step for the triacylglycerol (TAG) and glycerophospholipids. In vitro also transfers an acyl-group from acyl-ACP to the LPA producing a phosphatidic acid (PA). Prefers arachidonoyl-CoA as the acyl donor. Required for primary processing step during piRNA biosynthesis. Molecular mechanisms by which it promotes piRNA biosynthesis are unclear and do not involve its acyltransferase activity. The chain is Glycerol-3-phosphate acyltransferase 2, mitochondrial from Mus musculus (Mouse).